We begin with the raw amino-acid sequence, 571 residues long: Sulfite reductase [NADPH] hemoprotein beta-component (571 aa).

Positions 435, 441, 480, and 484 each coordinate [4Fe-4S] cluster. Cysteine 484 contributes to the siroheme binding site.

The protein belongs to the nitrite and sulfite reductase 4Fe-4S domain family. Alpha(8)-beta(8). The alpha component is a flavoprotein, the beta component is a hemoprotein. Requires siroheme as cofactor. The cofactor is [4Fe-4S] cluster.

The enzyme catalyses hydrogen sulfide + 3 NADP(+) + 3 H2O = sulfite + 3 NADPH + 4 H(+). It functions in the pathway sulfur metabolism; hydrogen sulfide biosynthesis; hydrogen sulfide from sulfite (NADPH route): step 1/1. Component of the sulfite reductase complex that catalyzes the 6-electron reduction of sulfite to sulfide. This is one of several activities required for the biosynthesis of L-cysteine from sulfate. In Musicola paradisiaca (strain Ech703) (Dickeya paradisiaca), this protein is Sulfite reductase [NADPH] hemoprotein beta-component.